Here is a 279-residue protein sequence, read N- to C-terminus: Energy-coupling factor transporter ATP-binding protein EcfA1 (279 aa).

The ABC transporter domain maps to 6–240; the sequence is VEFRNVSFRY…KDALREIGLD (235 aa). 40–47 is an ATP binding site; sequence GHNGSGKS.

It belongs to the ABC transporter superfamily. Energy-coupling factor EcfA family. Forms a stable energy-coupling factor (ECF) transporter complex composed of 2 membrane-embedded substrate-binding proteins (S component), 2 ATP-binding proteins (A component) and 2 transmembrane proteins (T component).

The protein resides in the cell membrane. Functionally, ATP-binding (A) component of a common energy-coupling factor (ECF) ABC-transporter complex. Unlike classic ABC transporters this ECF transporter provides the energy necessary to transport a number of different substrates. The chain is Energy-coupling factor transporter ATP-binding protein EcfA1 from Oceanobacillus iheyensis (strain DSM 14371 / CIP 107618 / JCM 11309 / KCTC 3954 / HTE831).